Reading from the N-terminus, the 330-residue chain is MTLAVKVPLKEGEIVRRRLIELGALDNTYKIKREGNFLLIPVKFPVKGFEVVEAELEQVSRRPNSYREIVNVPQELRRFLPTSFDIIGNIAIIEIPEELKGYAKEIGRAIVEVHKNVKAVYMKGSKIEGEYRTRELIHIAGENITETIHRENGIRLKLDVAKVYFSPRLATERMRVFKMAQEGEVVFDMFAGVGPFSILLAKKAELVFACDINPWAIKYLEENIKLNKVNNVVPILGDSREIEVKADRIIMNLPKYAHEFLEHAISCINDGGVIHYYGFGPEGDPYGWHLERIRELANKFGVKVEVLGKRVIRNYAPRQYNIAIDFRVSF.

Residues Arg-173, 211 to 212 (DI), 238 to 239 (DS), and Asn-252 each bind S-adenosyl-L-methionine.

It belongs to the class I-like SAM-binding methyltransferase superfamily. TRM5/TYW2 family.

Its subcellular location is the cytoplasm. The catalysed reaction is guanosine(37) in tRNA + S-adenosyl-L-methionine = N(1)-methylguanosine(37) in tRNA + S-adenosyl-L-homocysteine + H(+). Specifically methylates the N1 position of guanosine-37 in various tRNAs. This chain is tRNA (guanine(37)-N(1))-methyltransferase Trm5b, found in Pyrococcus abyssi (strain GE5 / Orsay).